The primary structure comprises 316 residues: MNQLDALKQYTTVVADTGDFKQLAQFQPQDATTNPSLILKAVQKPEYAPLLKDCVTRWHGRAIDELMDRLIVRFGCEILSIIPGRVSTEVDARLSFDTAATVARAERIVELYQAEGLHIDRVLIKIAATWEGIQAARQLEQRGIHTNLTLLFSFAQAVACGQAKVQLISPFVGRIYDWYKKQAGANWDEAAMAGANDPGVQSVRAIYNHYKHFGIGTEVMGASFRNTGQIVALAGCDLLTIAPELLAQLAASNAPVARVLDPEAARRVALQPVQYDEAGFRYALNADAMATEKLAEGIRAFAADAAKLEQLMQAAA.

The active-site Schiff-base intermediate with substrate is Lys-125.

It belongs to the transaldolase family. Type 1 subfamily. As to quaternary structure, homodimer.

The protein resides in the cytoplasm. It catalyses the reaction D-sedoheptulose 7-phosphate + D-glyceraldehyde 3-phosphate = D-erythrose 4-phosphate + beta-D-fructose 6-phosphate. The protein operates within carbohydrate degradation; pentose phosphate pathway; D-glyceraldehyde 3-phosphate and beta-D-fructose 6-phosphate from D-ribose 5-phosphate and D-xylulose 5-phosphate (non-oxidative stage): step 2/3. Transaldolase is important for the balance of metabolites in the pentose-phosphate pathway. The chain is Transaldolase from Acidovorax sp. (strain JS42).